A 276-amino-acid polypeptide reads, in one-letter code: Large ribosomal subunit protein uL2c (276 aa).

The interval 225-276 is disordered; it reads AMNPVDHPHGGGEGRTPIGRKKPVTPWGYSALGKKSRKRNRYSDASILRRRE.

It belongs to the universal ribosomal protein uL2 family. As to quaternary structure, part of the 50S ribosomal subunit.

The protein resides in the plastid. Its subcellular location is the chloroplast. This Pinus koraiensis (Korean pine) protein is Large ribosomal subunit protein uL2c (rpl2).